We begin with the raw amino-acid sequence, 103 residues long: ATP synthase F(0) complex subunit g, mitochondrial (103 aa).

Alanine 2 bears the N-acetylalanine mark. An N6-acetyllysine mark is found at lysine 11, lysine 24, lysine 35, and lysine 54.

Belongs to the ATPase g subunit family. As to quaternary structure, component of the ATP synthase complex composed at least of ATP5F1A/subunit alpha, ATP5F1B/subunit beta, ATP5MC1/subunit c (homooctomer), MT-ATP6/subunit a, MT-ATP8/subunit 8, ATP5ME/subunit e, ATP5MF/subunit f, ATP5MG/subunit g, ATP5MK/subunit k, ATP5MJ/subunit j, ATP5F1C/subunit gamma, ATP5F1D/subunit delta, ATP5F1E/subunit epsilon, ATP5PF/subunit F6, ATP5PB/subunit b, ATP5PD/subunit d, ATP5PO/subunit OSCP. ATP synthase complex consists of a soluble F(1) head domain (subunits alpha(3) and beta(3)) - the catalytic core - and a membrane F(0) domain - the membrane proton channel (subunits c, a, 8, e, f, g, k and j). These two domains are linked by a central stalk (subunits gamma, delta, and epsilon) rotating inside the F1 region and a stationary peripheral stalk (subunits F6, b, d, and OSCP).

The protein resides in the mitochondrion. The protein localises to the mitochondrion inner membrane. Subunit g, of the mitochondrial membrane ATP synthase complex (F(1)F(0) ATP synthase or Complex V) that produces ATP from ADP in the presence of a proton gradient across the membrane which is generated by electron transport complexes of the respiratory chain. ATP synthase complex consist of a soluble F(1) head domain - the catalytic core - and a membrane F(1) domain - the membrane proton channel. These two domains are linked by a central stalk rotating inside the F(1) region and a stationary peripheral stalk. During catalysis, ATP synthesis in the catalytic domain of F(1) is coupled via a rotary mechanism of the central stalk subunits to proton translocation. In vivo, can only synthesize ATP although its ATP hydrolase activity can be activated artificially in vitro. Part of the complex F(0) domain. This Homo sapiens (Human) protein is ATP synthase F(0) complex subunit g, mitochondrial.